We begin with the raw amino-acid sequence, 364 residues long: Putative agmatine deiminase (364 aa).

C355 acts as the Amidino-cysteine intermediate in catalysis.

The protein belongs to the agmatine deiminase family.

The catalysed reaction is agmatine + H2O = N-carbamoylputrescine + NH4(+). In Mycoplasma capricolum subsp. capricolum (strain California kid / ATCC 27343 / NCTC 10154), this protein is Putative agmatine deiminase.